Consider the following 182-residue polypeptide: Fatty-acid and retinol-binding protein 1 (182 aa).

A signal peptide spans 1-17 (MIRATIILAAVAALAFS). A coiled-coil region spans residues 86–106 (EKASKLHQIVKDKVNALNDEA).

This sequence belongs to the fatty-acid and retinol-binding protein (FARBP) family.

It is found in the secreted. Probably binds lipids. The chain is Fatty-acid and retinol-binding protein 1 (far-1) from Caenorhabditis elegans.